We begin with the raw amino-acid sequence, 204 residues long: Guanine-specific ADP-ribosyl transferase (204 aa).

Residues 1-42 form the signal peptide; that stretch reads MITTSLRRRTAAAVLSLSAVLATTAATAPGAAPAPSAAPAKA. A disulfide bridge connects residues Cys-46 and Cys-76. Residues 81–85 and Lys-98 each bind NADH; that span reads RSDSR. GDP contacts are provided by residues 111 to 114, 132 to 134, Trp-159, and Gln-162; these read VLVN and WYK. The short motif at 132-136 is the PN (phosphate-nicotinamide) loop element; sequence WYKSG. A disulfide bridge links Cys-180 with Cys-194.

Belongs to the pierisin ADP-ribosyltransferase family. In terms of assembly, monomer.

It localises to the secreted. It catalyses the reaction guanosine + NAD(+) = N(2)-(ADP-D-ribosyl)-guanosine + nicotinamide + H(+). The catalysed reaction is a 2'-deoxyguanosine in DNA + NAD(+) = an N(2)-(ADP-L-ribosyl)-2'-deoxyguanosine in DNA + nicotinamide + H(+). The enzyme catalyses 2'-deoxyguanosine + NAD(+) = N(2)-(ADP-D-ribosyl)-2'-deoxyguanosine + nicotinamide + H(+). It carries out the reaction GMP + NAD(+) = N(2)-(ADP-D-ribosyl)-GMP + nicotinamide + H(+). It catalyses the reaction GTP + NAD(+) = N(2)-(ADP-D-ribosyl)-GTP + nicotinamide + H(+). The catalysed reaction is dGMP + NAD(+) = N(2)-(ADP-D-ribosyl)-dGMP + nicotinamide + H(+). The enzyme catalyses dGTP + NAD(+) = N(2)-(ADP-D-ribosyl)-dGTP + nicotinamide + H(+). It carries out the reaction 3',5'-cyclic GMP + NAD(+) = N(2)-(ADP-D-ribosyl)-3',5'-cyclic GMP + nicotinamide + H(+). It catalyses the reaction guanine + NAD(+) = N(2)-(ADP-D-ribosyl)-guanine + nicotinamide + H(+). The catalysed reaction is GDP + NAD(+) = N(2)-(ADP-D-ribosyl)-GDP + nicotinamide + H(+). With respect to regulation, inhibited by NADH. In terms of biological role, ADP-ribosylates the N2 amino group of guanosine, deoxyguanosine, GMP, dGMP, cGMP, GTP and dGTP; oligo-guanosine, oligo-deoxyguanosine and tRNA are ADP-ribosylated less efficiently, while dsDNA is a very poor substrate. Also acts on GDP. The sequence is that of Guanine-specific ADP-ribosyl transferase from Streptomyces coelicolor (strain ATCC BAA-471 / A3(2) / M145).